A 294-amino-acid polypeptide reads, in one-letter code: 4-hydroxy-tetrahydrodipicolinate synthase (294 aa).

Thr-45 provides a ligand contact to pyruvate. Tyr-133 acts as the Proton donor/acceptor in catalysis. Lys-161 acts as the Schiff-base intermediate with substrate in catalysis. Ile-203 provides a ligand contact to pyruvate.

This sequence belongs to the DapA family. In terms of assembly, homotetramer; dimer of dimers.

The protein resides in the cytoplasm. The enzyme catalyses L-aspartate 4-semialdehyde + pyruvate = (2S,4S)-4-hydroxy-2,3,4,5-tetrahydrodipicolinate + H2O + H(+). The protein operates within amino-acid biosynthesis; L-lysine biosynthesis via DAP pathway; (S)-tetrahydrodipicolinate from L-aspartate: step 3/4. In terms of biological role, catalyzes the condensation of (S)-aspartate-beta-semialdehyde [(S)-ASA] and pyruvate to 4-hydroxy-tetrahydrodipicolinate (HTPA). The protein is 4-hydroxy-tetrahydrodipicolinate synthase of Shewanella frigidimarina (strain NCIMB 400).